The chain runs to 245 residues: 23S rRNA (guanosine-2'-O-)-methyltransferase RlmB (245 aa).

S-adenosyl-L-methionine is bound by residues Gly-197, Ile-217, and Leu-226.

It belongs to the class IV-like SAM-binding methyltransferase superfamily. RNA methyltransferase TrmH family. RlmB subfamily.

Its subcellular location is the cytoplasm. The catalysed reaction is guanosine(2251) in 23S rRNA + S-adenosyl-L-methionine = 2'-O-methylguanosine(2251) in 23S rRNA + S-adenosyl-L-homocysteine + H(+). Specifically methylates the ribose of guanosine 2251 in 23S rRNA. This chain is 23S rRNA (guanosine-2'-O-)-methyltransferase RlmB, found in Bordetella parapertussis (strain 12822 / ATCC BAA-587 / NCTC 13253).